Here is a 320-residue protein sequence, read N- to C-terminus: Malate dehydrogenase (320 aa).

Residues 10 to 15 (GAGNIG) and aspartate 34 contribute to the NAD(+) site. 2 residues coordinate substrate: arginine 83 and arginine 89. NAD(+)-binding positions include asparagine 96 and 119 to 121 (ITN). Asparagine 121 and arginine 152 together coordinate substrate. Catalysis depends on histidine 176, which acts as the Proton acceptor.

It belongs to the LDH/MDH superfamily. MDH type 3 family.

The catalysed reaction is (S)-malate + NAD(+) = oxaloacetate + NADH + H(+). Functionally, catalyzes the reversible oxidation of malate to oxaloacetate. In Sphingopyxis alaskensis (strain DSM 13593 / LMG 18877 / RB2256) (Sphingomonas alaskensis), this protein is Malate dehydrogenase.